We begin with the raw amino-acid sequence, 80 residues long: Translation initiation factor IF-1, chloroplastic (80 aa).

Residues 1 to 72 form the S1-like domain; it reads MKEHDLINME…TKGRILYRIR (72 aa).

The protein belongs to the IF-1 family. In terms of assembly, component of the 30S ribosomal translation pre-initiation complex which assembles on the 30S ribosome in the order IF-2 and IF-3, IF-1 and N-formylmethionyl-tRNA(fMet); mRNA recruitment can occur at any time during PIC assembly.

It localises to the plastid. It is found in the chloroplast. One of the essential components for the initiation of protein synthesis. Stabilizes the binding of IF-2 and IF-3 on the 30S subunit to which N-formylmethionyl-tRNA(fMet) subsequently binds. Helps modulate mRNA selection, yielding the 30S pre-initiation complex (PIC). Upon addition of the 50S ribosomal subunit IF-1, IF-2 and IF-3 are released leaving the mature 70S translation initiation complex. The protein is Translation initiation factor IF-1, chloroplastic of Psilotum nudum (Whisk fern).